The chain runs to 380 residues: Cell division protein FtsZ 2 (380 aa).

GTP is bound by residues Gly-47 to Asn-51, Gly-134 to Gly-136, Glu-165, Arg-168, and Asp-211.

It belongs to the FtsZ family. In terms of assembly, homodimer. Polymerizes to form a dynamic ring structure in a strictly GTP-dependent manner. Interacts directly with several other division proteins.

Its subcellular location is the cytoplasm. Its function is as follows. Essential cell division protein that forms a contractile ring structure (Z ring) at the future cell division site. The regulation of the ring assembly controls the timing and the location of cell division. One of the functions of the FtsZ ring is to recruit other cell division proteins to the septum to produce a new cell wall between the dividing cells. Binds GTP and shows GTPase activity. In Methanocaldococcus jannaschii (strain ATCC 43067 / DSM 2661 / JAL-1 / JCM 10045 / NBRC 100440) (Methanococcus jannaschii), this protein is Cell division protein FtsZ 2.